Consider the following 146-residue polypeptide: Large ribosomal subunit protein uL15 (146 aa).

Positions 1-13 (MKLHELYPAEGSR) are enriched in basic and acidic residues. The disordered stretch occupies residues 1–55 (MKLHELYPAEGSRKVRNRVGRGAATGNGKTSGRGQKGQKARSGGKVRPGFEGGQL). The span at 23–35 (AATGNGKTSGRGQ) shows a compositional bias: gly residues.

Belongs to the universal ribosomal protein uL15 family. In terms of assembly, part of the 50S ribosomal subunit.

In terms of biological role, binds to the 23S rRNA. The chain is Large ribosomal subunit protein uL15 from Staphylococcus carnosus (strain TM300).